Consider the following 87-residue polypeptide: Putative defensin-like protein 304 (87 aa).

Residues 1-19 (MKSNKVTFFLGLFLVSAFC) form the signal peptide. 3 cysteine pairs are disulfide-bonded: cysteine 27–cysteine 46, cysteine 33–cysteine 51, and cysteine 40–cysteine 53.

Belongs to the DEFL family.

Its subcellular location is the secreted. The sequence is that of Putative defensin-like protein 304 from Arabidopsis thaliana (Mouse-ear cress).